Reading from the N-terminus, the 420-residue chain is Protein disulfide isomerase CRELD1 (420 aa).

The N-terminal stretch at 1 to 29 (MAPWPPKGLVPAMLWGLSLFLNLPGPIWL) is a signal peptide. The Extracellular portion of the chain corresponds to 30-362 (QPSPPPQSSP…GFFSEMTEDE (333 aa)). Residues 46–49 (CHTC) carry the CXXC motif. C46 and C49 are joined by a disulfide. N79 carries N-linked (GlcNAc...) asparagine glycosylation. An EGF-like 1 domain is found at 153–193 (LPCPGGTERPCGGYGQCEGEGTRGGSGHCDCQAGYGGEACG). Cystine bridges form between C155-C169, C163-C181, and C183-C192. An N-linked (GlcNAc...) asparagine glycan is attached at N205. 2 FU repeats span residues 208 to 256 (HLVC…GANC) and 268 to 315 (SYEC…EVCP). Residues 278-281 (CLGC) carry the CXXC motif. 4 disulfides stabilise this stretch: C278-C281, C309-C321, C314-C330, and C332-C343. One can recognise an EGF-like 2; calcium-binding domain in the interval 305-344 (DVDECETEVCPGENKQCENTEGGYRCICAEGYKQMEGICV). The chain crosses the membrane as a helical span at residues 363–383 (LVVLQQMFFGIIICALATLAA). A topological domain (cytoplasmic) is located at residue K384. The helical transmembrane segment at 385-405 (GDLVFTAIFIGAVAAMTGYWL) threads the bilayer. Residues 406–420 (SERSDRVLEGFIKGR) are Extracellular-facing.

It belongs to the CRELD family. In terms of tissue distribution, highly expressed in fetal lung, liver, kidney, adult heart, brain and skeletal muscle. Weakly expressed in placenta, fetal brain, and adult lung, liver, kidney and pancreas.

Its subcellular location is the membrane. It carries out the reaction Catalyzes the rearrangement of -S-S- bonds in proteins.. Its function is as follows. Protein disulfide isomerase. Promotes the localization of acetylcholine receptors (AChRs) to the plasma membrane. The chain is Protein disulfide isomerase CRELD1 (CRELD1) from Homo sapiens (Human).